The chain runs to 191 residues: uncharacterized protein (191 aa).

This is an uncharacterized protein from Schizosaccharomyces pombe (strain 972 / ATCC 24843) (Fission yeast).